The primary structure comprises 157 residues: uncharacterized protein (157 aa).

The helical transmembrane segment at 42–64 threads the bilayer; that stretch reads SCIRLIVMFICVAMITCPNSLRF.

It localises to the membrane. This is an uncharacterized protein from Saccharomyces cerevisiae (strain ATCC 204508 / S288c) (Baker's yeast).